We begin with the raw amino-acid sequence, 369 residues long: Ubiquitin carboxyl-terminal hydrolase 12 (369 aa).

Positions Met1–Leu4 match the Required for plasma membrane localization of USP12/WDR20 motif. A USP domain is found at Phe39 to Arg368. Cys48 functions as the Nucleophile in the catalytic mechanism. Positions Lys145 to Thr165 are disordered. 4 residues coordinate Zn(2+): Cys185, Cys188, Cys232, and Cys235. Residue His316 is the Proton acceptor of the active site.

The protein belongs to the peptidase C19 family. USP12/USP46 subfamily. Interacts with WDR48. Interacts with WDR20; this interaction promotes translocation of the USP12 complex to the plasma membrane. Component of the USP12/WDR20/WDR48 deubiquitinating complex. Component of the USP12/WDR20/WDR48 deubiquitinating complex. Interacts with PHLPP1. Interacts with RBPJ. Interacts with CBP; this interaction blocks the acetyltransferase activity of CREBBP.

It is found in the nucleus. Its subcellular location is the cytoplasm. The protein resides in the cell membrane. The catalysed reaction is Thiol-dependent hydrolysis of ester, thioester, amide, peptide and isopeptide bonds formed by the C-terminal Gly of ubiquitin (a 76-residue protein attached to proteins as an intracellular targeting signal).. Activated by interaction with WDR20, WDR48 and DMWD through different allosteric mechanisms. In terms of biological role, deubiquitinating enzyme that plays various roles in the regulation of the immune response and inflammation. During TCR engagement and activation, translocates into the cytoplasm and deubiquitinates its substrates LAT and TRAT1 and prevents their lysosome-dependent degradation to stabilize the TCR signaling complex at the plasma membrane. Plays an essential role in the selective LPS-induced macrophage response through the activation of NF-kappa-B pathway. In addition, promotes that antiviral immune response through targeting DNA sensor IFI16 to inhibit its proteasome-dependent degradation. Participates in the interferon signaling pathway and antiviral response independently of its deubiquitinase activity by maintaining nuclear phosphorylated STAT1 levels via inhibition of its CREBBP-mediated acetylation and subsequent dephosphorylation. Plays an intrinsic role in promoting the differentiation, activation and proliferation of CD4(+) T-cell by activating the NF-kappa-B signaling pathway through deubiquitinating and stabilizing B-cell lymphoma/leukemia 10/BCL10. In myeloid-derived suppressor cells promotes the activation of the NF-kappa-B via deubiquitination and stabilization of RELA. Regulates the 'Lys-63'-linked polyubiquitin chains of BAX and thereby modulates the mitochondrial apoptotic process. Negative regulator of NOTCH signaling that specifically deubiquitinates non-activated NOTCH receptors to target them for lysosomal degradation; deubiquitination of NOTCH stimulates its transport form late endosomes to lysosomes. Protects neurons against HTT/huntingtin-induced polyglutamine expansion-dependent neurodegeneration through regulation of autophagic flux. This function is independent of deubiquitinase activity or of other components of the USP12-WDR20-WDR48 deubiquitinating complex. In complex with WDR48, acts as a potential tumor suppressor by positively regulating PHLPP1 stability. The polypeptide is Ubiquitin carboxyl-terminal hydrolase 12 (USP12) (Bos taurus (Bovine)).